A 925-amino-acid polypeptide reads, in one-letter code: Probable dipeptidyl-aminopeptidase B (925 aa).

The interval 1 to 104 is disordered; sequence MTPYRDVPPV…RHAQKKGPGM (104 aa). The Cytoplasmic segment spans residues 1–110; it reads MTPYRDVPPV…GPGMDRGMRR (110 aa). Low complexity predominate over residues 31-40; that stretch reads ESGSSVSTTS. The segment covering 55–72 has biased composition (basic and acidic residues); that stretch reads LSEKQPRGDDNEDALKDE. A helical; Signal-anchor for type II membrane protein membrane pass occupies residues 111–131; sequence ALLIAAGLLVSAWVAGLFVYI. Topologically, residues 132 to 925 are vacuolar; the sequence is ATKSYKPASA…PKPNGKRRAA (794 aa). Asn-369 carries N-linked (GlcNAc...) asparagine glycosylation. Ser-773 functions as the Charge relay system in the catalytic mechanism. Asn-832 carries an N-linked (GlcNAc...) asparagine glycan. Residues Asp-850 and His-883 each act as charge relay system in the active site.

This sequence belongs to the peptidase S9B family.

The protein resides in the vacuole membrane. It carries out the reaction Release of an N-terminal dipeptide, Xaa-Yaa-|-Zaa-, from a polypeptide, preferentially when Yaa is Pro, provided Zaa is neither Pro nor hydroxyproline.. Type IV dipeptidyl-peptidase which removes N-terminal dipeptides sequentially from polypeptides having unsubstituted N-termini provided that the penultimate residue is proline. This chain is Probable dipeptidyl-aminopeptidase B (DAPB), found in Chaetomium globosum (strain ATCC 6205 / CBS 148.51 / DSM 1962 / NBRC 6347 / NRRL 1970) (Soil fungus).